We begin with the raw amino-acid sequence, 667 residues long: MSELADSGPSGASAPSQLRAVTLEDLGLLLAGGLASPEPLSLEELSERYESSHPTSTASVPEQDTAKHWNQLEQWVVELQAEVACLREHKQRCERATRSLLRELLQVRARVQLQGSELRQLQQEARPAAQAPEKEAPEFSGLQNQMQALDKRLVEVREALTRLRRRQVQQEAERRGAEQEAGLRLAKLTDLLQQEEQGREVACGALQKNQEDSSRRVDLEVARMQAQVTKLGEEVSLRFLKREAKLCGFLQKSFLALEKRMKASESSRLKLEGSLRGELESRWEKLRGLMEERLRALQGQHEESHLLEQCQGLDAAVAQLTKFVQQNQASLNRVLLAEEKAWDAKGRLEESRAGELAAYVQENLEAAQLAGELARQEMHGELVLLREKSRALEASVAQLAGQLKELSGHLPALSSRLDLQEQMLGLRLSEAKTEWEGAERKSLEDLARWRKEVTEHLRGVREKVDGLPQQIESVSDKCLLHKSDSDLRISAEGKAREFKVGALRQELATLLSSVQLLKEDNPGRKIAEMQGKLATFQNQIMKLENCVQANKTIQNLRFNTEARLRTQEMATLWESVLRLWSEEGPRTPLGSWKALPSLVRPRVFIKDMAPGKVVPMNCWGVYQAVRWLRWKASLIKLRALRRPGGVLEKPHSQEQVQQLTPSLFIQK.

Coiled-coil stretches lie at residues 76-182 (VVEL…QEAG), 215-302 (RRVD…GQHE), 384-410 (LLREKSRALEASVAQLAGQLKELSGHL), and 457-521 (LRGV…KEDN).

The protein localises to the early endosome. This Homo sapiens (Human) protein is Coiled-coil domain-containing protein 154.